The chain runs to 738 residues: Isocitrate dehydrogenase [NADP] (738 aa).

Residues asparagine 83 and serine 85 each coordinate NADP(+). Residues serine 130, asparagine 133, arginine 137, arginine 143, and lysine 253 each contribute to the D-threo-isocitrate site. Asparagine 133 is an NADP(+) binding site. Residue aspartate 346 participates in Mg(2+) binding. 2 residues coordinate D-threo-isocitrate: tyrosine 416 and arginine 543. Mg(2+) is bound by residues aspartate 544 and aspartate 548. NADP(+)-binding residues include glycine 580, histidine 585, arginine 596, aspartate 598, and arginine 645.

The protein belongs to the monomeric-type IDH family. Monomer. Mg(2+) serves as cofactor. Requires Mn(2+) as cofactor.

Its subcellular location is the cytoplasm. The enzyme catalyses D-threo-isocitrate + NADP(+) = 2-oxoglutarate + CO2 + NADPH. Its activity is regulated as follows. Weakly inhibited by oxaloacetate, 2-oxoglutarate and citrate. Severely inhibited by oxaloacetate plus glyoxylate. Its function is as follows. Catalyzes the oxidative decarboxylation of isocitrate to 2-oxoglutarate and carbon dioxide with the concomitant reduction of NADP(+). Cannot use NAD(+). This is Isocitrate dehydrogenase [NADP] from Corynebacterium glutamicum (strain ATCC 13032 / DSM 20300 / JCM 1318 / BCRC 11384 / CCUG 27702 / LMG 3730 / NBRC 12168 / NCIMB 10025 / NRRL B-2784 / 534).